The sequence spans 416 residues: Protein-glutamine gamma-glutamyltransferase (416 aa).

A signal peptide (tat-type signal) is located at residues 1–29 (MHKRRRLLAFATVGAVICTAGFTPSVSQA). Residues 30 to 85 (ASSGDGEEKGSYAETHGLTADDVESINALNERALTLGQPGKPPKELPPSASAPSRA) constitute a propeptide that is removed on maturation. The segment at 64–103 (TLGQPGKPPKELPPSASAPSRAPSDDRETPPAEPLDRMPE) is disordered. Positions 76–85 (PPSASAPSRA) are enriched in low complexity. Residues 86–103 (PSDDRETPPAEPLDRMPE) are compositionally biased toward basic and acidic residues. The active site involves C149. Residues 290–331 (GQDQRGSSDKRKYGDPEAFRPDQGTGLVDMSKDRSIPRSPAK) are disordered. A compositionally biased stretch (basic and acidic residues) spans 295 to 309 (GSSDKRKYGDPEAFR). Active-site residues include D340 and H359.

It belongs to the bacterial TGase family. In terms of processing, predicted to be exported by the Tat system. The position of the signal peptide cleavage has not been experimentally proven.

It carries out the reaction L-glutaminyl-[protein] + L-lysyl-[protein] = [protein]-L-lysyl-N(6)-5-L-glutamyl-[protein] + NH4(+). In terms of biological role, catalyzes the cross-linking of proteins and the conjugation of polyamines to proteins. This is Protein-glutamine gamma-glutamyltransferase from Streptomyces cinnamoneus (Streptoverticillium cinnamoneum).